The following is a 585-amino-acid chain: ATP-dependent lipid A-core flippase (585 aa).

The next 6 membrane-spanning stretches (helical) occupy residues 23 to 43, 64 to 84, 140 to 160, 163 to 183, 247 to 267, and 273 to 293; these read LAFG…AYVI, IAAY…FMGT, AFLT…WMFY, WQLS…VSVV, ILSV…VLYI, and FITD…TMLL. The region spanning 27–308 is the ABC transmembrane type-1 domain; the sequence is VAIIGMVGYS…LTTVNSEFQK (282 aa). The ABC transporter domain occupies 340–576; the sequence is LEFRDVTFHY…DGAYAQLHKL (237 aa). Residue 374-381 coordinates ATP; sequence GRSGSGKS.

Belongs to the ABC transporter superfamily. Lipid exporter (TC 3.A.1.106) family. In terms of assembly, homodimer.

It localises to the cell inner membrane. The enzyme catalyses ATP + H2O + lipid A-core oligosaccharideSide 1 = ADP + phosphate + lipid A-core oligosaccharideSide 2.. In terms of biological role, involved in lipopolysaccharide (LPS) biosynthesis. Translocates lipid A-core from the inner to the outer leaflet of the inner membrane. Transmembrane domains (TMD) form a pore in the inner membrane and the ATP-binding domain (NBD) is responsible for energy generation. The polypeptide is ATP-dependent lipid A-core flippase (Pseudoalteromonas atlantica (strain T6c / ATCC BAA-1087)).